The following is a 397-amino-acid chain: Succinate--CoA ligase [ADP-forming] subunit beta (397 aa).

One can recognise an ATP-grasp domain in the interval 9–254 (KALLKGYGAP…ETEEDAKEIE (246 aa)). Residues lysine 46, 53-55 (GRG), glutamate 109, alanine 112, and glutamate 117 each bind ATP. Positions 209 and 223 each coordinate Mg(2+). Residues asparagine 274 and 331 to 333 (GIM) contribute to the substrate site.

Belongs to the succinate/malate CoA ligase beta subunit family. In terms of assembly, heterotetramer of two alpha and two beta subunits. It depends on Mg(2+) as a cofactor.

The enzyme catalyses succinate + ATP + CoA = succinyl-CoA + ADP + phosphate. The catalysed reaction is GTP + succinate + CoA = succinyl-CoA + GDP + phosphate. The protein operates within carbohydrate metabolism; tricarboxylic acid cycle; succinate from succinyl-CoA (ligase route): step 1/1. Functionally, succinyl-CoA synthetase functions in the citric acid cycle (TCA), coupling the hydrolysis of succinyl-CoA to the synthesis of either ATP or GTP and thus represents the only step of substrate-level phosphorylation in the TCA. The beta subunit provides nucleotide specificity of the enzyme and binds the substrate succinate, while the binding sites for coenzyme A and phosphate are found in the alpha subunit. The sequence is that of Succinate--CoA ligase [ADP-forming] subunit beta from Rhizobium johnstonii (strain DSM 114642 / LMG 32736 / 3841) (Rhizobium leguminosarum bv. viciae).